The chain runs to 205 residues: Ras-related protein Rab-1A (205 aa).

Ser2 is subject to N-acetylserine. Positions 20, 21, 23, 24, 25, 26, 38, and 43 each coordinate GTP. Ser25 lines the Mg(2+) pocket. Positions 34-48 (DTYTESYISTIGVDF) match the Switch 1 motif. Residue Thr43 coordinates Mg(2+). Glycyl lysine isopeptide (Lys-Gly) (interchain with G-Cter in ubiquitin) cross-links involve residues Lys49 and Lys61. Asp66 is a binding site for Mg(2+). Positions 66 to 83 (DTAGQERFRTITSSYYRG) match the Switch 2 motif. Gly69, Asn124, Lys125, Asp127, Ala155, and Lys156 together coordinate GTP. The segment at 178–205 (PGATAGGAEKSNVKIQSTPVKQSGGGCC) is disordered. At Ser194 the chain carries Phosphoserine; by CDK1. Residues Cys204 and Cys205 are each lipidated (S-geranylgeranyl cysteine).

Belongs to the small GTPase superfamily. Rab family. As to quaternary structure, may interact with YIPF5. Interacts with C9orf72; the interaction mediates recruitment of RAB1A to the ATG1/ULK1 kinase complex. Interacts with GDI1; this promotes dissociation from membranes. Requires Mg(2+) as cofactor. Post-translationally, phosphorylated by CDK1 kinase during mitosis. Ubiquitinated via 'Lys-11'-linked ubiquitination on Lys-49 and Lys-61; impairing the recruitment of guanosine diphosphate (GDP) dissociation inhibitor 1/GDI1.

The protein localises to the golgi apparatus. It localises to the endoplasmic reticulum. Its subcellular location is the early endosome. It is found in the cytoplasm. The protein resides in the cytosol. The protein localises to the membrane. It localises to the melanosome. The enzyme catalyses GTP + H2O = GDP + phosphate + H(+). Its activity is regulated as follows. Regulated by guanine nucleotide exchange factors (GEFs) which promote the exchange of bound GDP for free GTP. Regulated by GTPase activating proteins (GAPs) which increase the GTP hydrolysis activity. Inhibited by GDP dissociation inhibitors (GDIs). The small GTPases Rab are key regulators of intracellular membrane trafficking, from the formation of transport vesicles to their fusion with membranes. Rabs cycle between an inactive GDP-bound form and an active GTP-bound form that is able to recruit to membranes different sets of downstream effectors directly responsible for vesicle formation, movement, tethering and fusion. RAB1A regulates vesicular protein transport from the endoplasmic reticulum (ER) to the Golgi compartment and on to the cell surface, and plays a role in IL-8 and growth hormone secretion. Required to modulate the compacted morphology of the Golgi. Regulates the level of CASR present at the cell membrane. Plays a role in cell adhesion and cell migration, via its role in protein trafficking. Plays a role in autophagosome assembly and cellular defense reactions against pathogenic bacteria. Plays a role in microtubule-dependent protein transport by early endosomes and in anterograde melanosome transport. This chain is Ras-related protein Rab-1A (RAB1A), found in Sus scrofa (Pig).